A 395-amino-acid polypeptide reads, in one-letter code: Protein HIGH CHLOROPHYLL FLUORESCENCE PHENOTYPE 244, chloroplastic (395 aa).

Residues 1 to 64 constitute a chloroplast transit peptide; that stretch reads MASLRLPAQL…ERSIVVPVTC (64 aa).

Belongs to the NmrA-type oxidoreductase family. Component of a high molecular weight complex containing OHP1, OHP2 and HCF244, and PSII core proteins D1/D2, HCF136 and HCF173. Interacts with OHP1. Forms a trimeric complex with OHP1 and OHP2 that mutually stabilizes each subunit.

Its subcellular location is the plastid. The protein resides in the chloroplast stroma. The protein localises to the chloroplast thylakoid membrane. Auxiliary factor required, together with HCF173, for the biogenesis of photosystem II (PSII), especially for the synthesis of the reaction center proteins (e.g. D1), via the regulation of the corresponding mRNA (e.g. psbA) translation initiation (ribosomal loading) and stabilization. Forms a trimeric complex with OHP1 and OHP2 that is required to promote PSII core subunit assembly. The trimeric complex forms a transient PSII reaction center-like complex with PsbA, PsbD, PsbE, PsbF and PsbI subunits in thylakoids for early assembly of PSII as well as PSII repair. The trimeric complex is required for the recruitment of ribosomes to the psbA mRNA during PSII biogenesis and repair. The polypeptide is Protein HIGH CHLOROPHYLL FLUORESCENCE PHENOTYPE 244, chloroplastic (Arabidopsis thaliana (Mouse-ear cress)).